Here is a 209-residue protein sequence, read N- to C-terminus: Imidazole glycerol phosphate synthase subunit HisH (209 aa).

The region spanning 3 to 209 (KIAIIDYGMG…SILKNFGEMK (207 aa)) is the Glutamine amidotransferase type-1 domain. C81 (nucleophile) is an active-site residue. Catalysis depends on residues H190 and E192.

In terms of assembly, heterodimer of HisH and HisF.

The protein resides in the cytoplasm. It carries out the reaction 5-[(5-phospho-1-deoxy-D-ribulos-1-ylimino)methylamino]-1-(5-phospho-beta-D-ribosyl)imidazole-4-carboxamide + L-glutamine = D-erythro-1-(imidazol-4-yl)glycerol 3-phosphate + 5-amino-1-(5-phospho-beta-D-ribosyl)imidazole-4-carboxamide + L-glutamate + H(+). The enzyme catalyses L-glutamine + H2O = L-glutamate + NH4(+). The protein operates within amino-acid biosynthesis; L-histidine biosynthesis; L-histidine from 5-phospho-alpha-D-ribose 1-diphosphate: step 5/9. Its function is as follows. IGPS catalyzes the conversion of PRFAR and glutamine to IGP, AICAR and glutamate. The HisH subunit catalyzes the hydrolysis of glutamine to glutamate and ammonia as part of the synthesis of IGP and AICAR. The resulting ammonia molecule is channeled to the active site of HisF. This is Imidazole glycerol phosphate synthase subunit HisH from Geobacter sulfurreducens (strain ATCC 51573 / DSM 12127 / PCA).